A 244-amino-acid polypeptide reads, in one-letter code: Venom nerve growth factor 1 (244 aa).

The signal sequence occupies residues 1-18; it reads MSMLCYTLIIAFLIGIWA. The propeptide occupies 19–125; the sequence is APKSEDNVPL…TLNRNIRAKR (107 aa). A compositionally biased stretch (basic and acidic residues) spans 47 to 66; it reads GLKTSRNTDQRHPAPKKAED. Residues 47–67 form a disordered region; that stretch reads GLKTSRNTDQRHPAPKKAEDQ. 3 disulfide bridges follow: cysteine 139–cysteine 205, cysteine 181–cysteine 233, and cysteine 193–cysteine 235.

The protein belongs to the NGF-beta family. As to quaternary structure, homodimer; non-covalently linked. Expressed by the venom gland.

It localises to the secreted. In terms of biological role, nerve growth factor is important for the development and maintenance of the sympathetic and sensory nervous systems. It stimulates division and differentiation of sympathetic and embryonic sensory neurons as well as basal forebrain cholinergic neurons in the brain. Its relevance in the snake venom is not clear. However, it has been shown to inhibit metalloproteinase-dependent proteolysis of platelet glycoprotein Ib alpha, suggesting a metalloproteinase inhibition to prevent metalloprotease autodigestion and/or protection against prey proteases. Binds a lipid between the two protein chains in the homodimer. The lipid-bound form promotes histamine relase from mouse mast cells, contrary to the lipid-free form. In Notechis scutatus scutatus (Mainland tiger snake), this protein is Venom nerve growth factor 1.